The sequence spans 341 residues: THO complex subunit 6 homolog (341 aa).

WD repeat units lie at residues Arg22–Ala61, Ala74–Glu112, Leu124–Ala163, Gly166–Thr205, Ser215–Val254, Pro256–Val293, and Gly295–Leu339. Ser180 is modified (phosphoserine).

The protein belongs to the WD repeat THOC6 family. Component of the THO subcomplex, which is composed of THOC1, THOC2, THOC3, THOC5, THOC6 and THOC7. The THO subcomplex interacts with DDX39B to form the THO-DDX39B complex which multimerizes into a 28-subunit tetrameric assembly. Component of the transcription/export (TREX) complex at least composed of ALYREF/THOC4, DDX39B, SARNP/CIP29, CHTOP and the THO subcomplex; in the complex interacts with THOC5; together with THOC5 and THOC7, plays a key structural role in the oligomerization of the THO-DDX39B complex. TREX seems to have a dynamic structure involving ATP-dependent remodeling.

The protein resides in the nucleus. It localises to the nucleus speckle. Its function is as follows. Component of the THO subcomplex of the TREX complex which is thought to couple mRNA transcription, processing and nuclear export, and which specifically associates with spliced mRNA and not with unspliced pre-mRNA. Plays a key structural role in the oligomerization of the THO-DDX39B complex. TREX is recruited to spliced mRNAs by a transcription-independent mechanism, binds to mRNA upstream of the exon-junction complex (EJC) and is recruited in a splicing- and cap-dependent manner to a region near the 5' end of the mRNA where it functions in mRNA export to the cytoplasm via the TAP/NXF1 pathway. Plays a role in apoptosis negative control involved in brain development. This is THO complex subunit 6 homolog (Thoc6) from Rattus norvegicus (Rat).